We begin with the raw amino-acid sequence, 243 residues long: Lectin-4 (243 aa).

Residue glutamine 1 is modified to Pyrrolidone carboxylic acid. Asparagine 5 carries an N-linked (GlcNAc...) asparagine; in alpha chain glycan. The N-linked (GlcNAc...) asparagine glycan is linked to asparagine 18. Positions 129 and 131 each coordinate Mn(2+). Residues aspartate 131, tryptophan 133, asparagine 135, and aspartate 140 each contribute to the Ca(2+) site. The Mn(2+) site is built by aspartate 140 and histidine 145.

It belongs to the leguminous lectin family. Homodimer of Alpha and Beta forms. N-glycosylation of Asn-5 converts form Beta to form Alpha.

Its function is as follows. Lectin which has a strong affinity for both the Lewis b and y human blood-group determinants. The sequence is that of Lectin-4 from Griffonia simplicifolia (Bandeiraea simplicifolia).